A 387-amino-acid polypeptide reads, in one-letter code: MSVIKMTDLDLAGKRVFIRADLNVPVKDGKVTSDARIRASLPTIELALKQGAKVMVTSHLGRPTEGEYNEEFSLLPVVNYLKDKLSNPVRLVKDYLDGVDVAEGELVVLENVRFNKGEKKDDETLSKKYAALCDVFVMDAFGTAHRAQASTHGIGKFADVACAGPLLAAELDALGKALKEPARPMVAIVGGSKVSTKLTVLDSLSKIADQLIVGGGIANTFIAAQGHDVGKSLYEADLVDEAKRLLTTCNIPVPSDVRVATEFSETASATLKSVNDVKADEQILDIGDASAQELAEILKNAKTILWNGPVGVFEFPNFRKGTEIVANAIADSEAFSIAGGGDTLAAIDLFGIADKISYISTGGGAFLEFVEGKVLPAVAMLEERAKK.

Substrate-binding positions include 21–23 (DLN), Arg36, and 59–62 (HLGR). Lys84 carries the post-translational modification N6-acetyllysine. Positions 113 and 146 each coordinate substrate. Residues Lys197, Glu314, and 340 to 343 (GGDT) contribute to the ATP site.

It belongs to the phosphoglycerate kinase family. Monomer.

It localises to the cytoplasm. The catalysed reaction is (2R)-3-phosphoglycerate + ATP = (2R)-3-phospho-glyceroyl phosphate + ADP. The protein operates within carbohydrate degradation; glycolysis; pyruvate from D-glyceraldehyde 3-phosphate: step 2/5. The polypeptide is Phosphoglycerate kinase (Shigella sonnei (strain Ss046)).